The primary structure comprises 673 residues: UvrABC system protein B (673 aa).

Residues 26–183 form the Helicase ATP-binding domain; sequence EGLEDGLAHQ…RRLAELQYAR (158 aa). 39–46 contributes to the ATP binding site; the sequence is GVTGSGKT. Residues 92 to 115 carry the Beta-hairpin motif; sequence YYDYYQPEAYVPSSDTFIEKDASV. The Helicase C-terminal domain maps to 431–597; the sequence is QVDDLLSEIR…GLNKKVVDIL (167 aa). Residues 608–627 are disordered; it reads AKGRGKSRPIVEPDNVPMDM. The 36-residue stretch at 633 to 668 folds into the UVR domain; that stretch reads QQKIHELEGLMMQHAQNLEFEEAAQIRDQLHLLREL.

This sequence belongs to the UvrB family. Forms a heterotetramer with UvrA during the search for lesions. Interacts with UvrC in an incision complex.

Its subcellular location is the cytoplasm. Its function is as follows. The UvrABC repair system catalyzes the recognition and processing of DNA lesions. A damage recognition complex composed of 2 UvrA and 2 UvrB subunits scans DNA for abnormalities. Upon binding of the UvrA(2)B(2) complex to a putative damaged site, the DNA wraps around one UvrB monomer. DNA wrap is dependent on ATP binding by UvrB and probably causes local melting of the DNA helix, facilitating insertion of UvrB beta-hairpin between the DNA strands. Then UvrB probes one DNA strand for the presence of a lesion. If a lesion is found the UvrA subunits dissociate and the UvrB-DNA preincision complex is formed. This complex is subsequently bound by UvrC and the second UvrB is released. If no lesion is found, the DNA wraps around the other UvrB subunit that will check the other stand for damage. The polypeptide is UvrABC system protein B (Escherichia coli O81 (strain ED1a)).